Consider the following 402-residue polypeptide: Guanine nucleotide-binding protein subunit alpha-1 (402 aa).

The span at 1-12 (MGCSASKPSEPS) shows a compositional bias: polar residues. The tract at residues 1–70 (MGCSASKPSE…PEPQKPAEPA (70 aa)) is disordered. G2 carries the N-myristoyl glycine lipid modification. A lipid anchor (S-palmitoyl cysteine) is attached at C3. A compositionally biased stretch (basic and acidic residues) spans 23-33 (KKVEQVPEPKP). Pro residues predominate over residues 34 to 69 (EPQPQPEPQPQPEPPKPAEPAPAPAPAPEPQKPAEP). The G-alpha domain maps to 82-402 (EAYGLLLCGA…FISDKYYQDA (321 aa)). A G1 motif region spans residues 85-98 (GLLLCGAGESGKTT). Residues E93, S94, G95, K96, T97, T98, D198, L223, S229, G251, N317, K318, D320, and A377 each contribute to the GTP site. Mg(2+) is bound at residue T97. The G2 motif stretch occupies residues 221 to 229 (DVLRARIRS). S229 lines the Mg(2+) pocket. Residues 244–253 (IRIFDVGGQK) form a G3 motif region. The tract at residues 313 to 320 (FLVCNKFD) is G4 motif. The G5 motif stretch occupies residues 375–380 (IVALNG).

This sequence belongs to the G-alpha family. In terms of assembly, g proteins are composed of 3 units; alpha, beta and gamma. The alpha chain contains the guanine nucleotide binding site. Mg(2+) is required as a cofactor.

The protein localises to the cytoplasm. Its subcellular location is the perinuclear region. It localises to the endomembrane system. Its function is as follows. Guanine nucleotide-binding proteins (G proteins) are involved as modulators or transducers in various transmembrane signaling systems. The polypeptide is Guanine nucleotide-binding protein subunit alpha-1 (GA1) (Trichomonas vaginalis).